We begin with the raw amino-acid sequence, 375 residues long: Succinyl-diaminopimelate desuccinylase (375 aa).

His-66 contacts Zn(2+). Asp-68 is a catalytic residue. Asp-99 provides a ligand contact to Zn(2+). Catalysis depends on Glu-133, which acts as the Proton acceptor. Zn(2+)-binding residues include Glu-134, Glu-162, and His-348.

It belongs to the peptidase M20A family. DapE subfamily. In terms of assembly, homodimer. Zn(2+) serves as cofactor. Co(2+) is required as a cofactor.

It carries out the reaction N-succinyl-(2S,6S)-2,6-diaminopimelate + H2O = (2S,6S)-2,6-diaminopimelate + succinate. It participates in amino-acid biosynthesis; L-lysine biosynthesis via DAP pathway; LL-2,6-diaminopimelate from (S)-tetrahydrodipicolinate (succinylase route): step 3/3. Its function is as follows. Catalyzes the hydrolysis of N-succinyl-L,L-diaminopimelic acid (SDAP), forming succinate and LL-2,6-diaminopimelate (DAP), an intermediate involved in the bacterial biosynthesis of lysine and meso-diaminopimelic acid, an essential component of bacterial cell walls. This chain is Succinyl-diaminopimelate desuccinylase, found in Escherichia coli O1:K1 / APEC.